Consider the following 307-residue polypeptide: tRNA N(3)-methylcytidine methyltransferase trm140 (307 aa).

Residues W83, Y87, G125, D150, D176, L177, and I197 each coordinate S-adenosyl-L-methionine.

Belongs to the methyltransferase superfamily. METL family.

The enzyme catalyses cytidine(32) in tRNA(Thr) + S-adenosyl-L-methionine = N(3)-methylcytidine(32) in tRNA(Thr) + S-adenosyl-L-homocysteine + H(+). Functionally, S-adenosyl-L-methionine-dependent methyltransferase that mediates N(3)-methylcytidine modification of residue 32 of the tRNA anticodon loop of tRNA(Thr). Does not catalyze N(3)-methylcytidine modification of tRNA(Ser). This Schizosaccharomyces pombe (strain 972 / ATCC 24843) (Fission yeast) protein is tRNA N(3)-methylcytidine methyltransferase trm140.